Here is a 249-residue protein sequence, read N- to C-terminus: Glucosamine-6-phosphate deaminase (249 aa).

Aspartate 67 acts as the Proton acceptor; for enolization step in catalysis. Asparagine 136 acts as the For ring-opening step in catalysis. Histidine 138 (proton acceptor; for ring-opening step) is an active-site residue. Glutamate 143 acts as the For ring-opening step in catalysis.

The protein belongs to the glucosamine/galactosamine-6-phosphate isomerase family. NagB subfamily.

It catalyses the reaction alpha-D-glucosamine 6-phosphate + H2O = beta-D-fructose 6-phosphate + NH4(+). Its pathway is amino-sugar metabolism; N-acetylneuraminate degradation; D-fructose 6-phosphate from N-acetylneuraminate: step 5/5. Its function is as follows. Catalyzes the reversible isomerization-deamination of glucosamine 6-phosphate (GlcN6P) to form fructose 6-phosphate (Fru6P) and ammonium ion. The protein is Glucosamine-6-phosphate deaminase of Clostridium botulinum (strain Eklund 17B / Type B).